Reading from the N-terminus, the 300-residue chain is Ubiquitin thioesterase otu2 (300 aa).

Disordered regions lie at residues 23–73 (RKQL…QQED) and 89–141 (TAEK…SEKM). A compositionally biased stretch (basic and acidic residues) spans 48–61 (LSQKHATERQKLDK). Residues 62–71 (GDEETNETQQ) show a composition bias toward acidic residues. Polar residues predominate over residues 89–109 (TAEKSSVQSSLNTKENTPQQP). Positions 115–141 (RQKERLERRKAEMKKMSEQAELESEKM) are enriched in basic and acidic residues. Positions 161 to 298 (LVAVDIPADG…GAHYNSLLYR (138 aa)) constitute an OTU domain.

It is found in the cytoplasm. The enzyme catalyses Thiol-dependent hydrolysis of ester, thioester, amide, peptide and isopeptide bonds formed by the C-terminal Gly of ubiquitin (a 76-residue protein attached to proteins as an intracellular targeting signal).. Functionally, hydrolase that can remove conjugated ubiquitin from proteins and may therefore play an important regulatory role at the level of protein turnover by preventing degradation. This Schizosaccharomyces pombe (strain 972 / ATCC 24843) (Fission yeast) protein is Ubiquitin thioesterase otu2 (otu2).